A 1107-amino-acid chain; its full sequence is Protein translocase subunit SecA (1107 aa).

ATP is bound by residues glutamine 169, 187 to 191 (GEGKT), and aspartate 688. A compositionally biased stretch (basic and acidic residues) spans 1036–1066 (RHAAEQRTDMSKYRTQKDDIEAQQKAQRDAA). The interval 1036 to 1107 (RHAAEQRTDM…KFKQCHGRNL (72 aa)) is disordered. The Zn(2+) site is built by cysteine 1091, cysteine 1093, cysteine 1102, and histidine 1103. Residues 1097-1107 (KKFKQCHGRNL) show a composition bias toward basic residues.

Belongs to the SecA family. Monomer and homodimer. Part of the essential Sec protein translocation apparatus which comprises SecA, SecYEG and auxiliary proteins SecDF. Other proteins may also be involved. Zn(2+) is required as a cofactor.

The protein localises to the cell inner membrane. Its subcellular location is the cytoplasm. It catalyses the reaction ATP + H2O + cellular proteinSide 1 = ADP + phosphate + cellular proteinSide 2.. Its function is as follows. Part of the Sec protein translocase complex. Interacts with the SecYEG preprotein conducting channel. Has a central role in coupling the hydrolysis of ATP to the transfer of proteins into and across the cell membrane, serving as an ATP-driven molecular motor driving the stepwise translocation of polypeptide chains across the membrane. This chain is Protein translocase subunit SecA, found in Porphyromonas gingivalis (strain ATCC BAA-308 / W83).